Reading from the N-terminus, the 308-residue chain is HTH-type transcriptional activator AllS (308 aa).

The HTH lysR-type domain maps to 2 to 59 (FDPETLRTFISVAETGSFSKAAERLCKTTATISYRIKLLEENTGVGLFFRTTRSVSLT). Residues 19–38 (FSKAAERLCKTTATISYRIK) constitute a DNA-binding region (H-T-H motif).

This sequence belongs to the LysR transcriptional regulatory family.

Its function is as follows. Positive regulator essential for the expression of allD operon. Binds to the allD promoter. The sequence is that of HTH-type transcriptional activator AllS (allS) from Salmonella paratyphi A (strain ATCC 9150 / SARB42).